The primary structure comprises 180 residues: Prorelaxin (180 aa).

An N-terminal signal peptide occupies residues 1 to 25; that stretch reads MLRLFLSHLLGVWLLLSLRARKIPA. Cystine bridges form between cysteine 33–cysteine 167, cysteine 45–cysteine 180, and cysteine 166–cysteine 171. A propeptide spans 53 to 154 (connecting peptide); sequence SSQQHREPRQ…RSRLDAHSRI (102 aa).

It belongs to the insulin family. In terms of assembly, heterodimer of a B chain and an A chain linked by two disulfide bonds. As to expression, expressed by the placenta. Exclusively detected in cells located in the lamellar placental labyrinth and absent from other placental and non-placental uterine parts.

The protein localises to the secreted. In terms of biological role, relaxin is an ovarian hormone that acts with estrogen to produce dilatation of the birth canal in many mammals. This Felis catus (Cat) protein is Prorelaxin (RLN).